The chain runs to 354 residues: Heat-inducible transcription repressor HrcA (354 aa).

Belongs to the HrcA family.

In terms of biological role, negative regulator of class I heat shock genes (grpE-dnaK-dnaJ and groELS operons). Prevents heat-shock induction of these operons. The chain is Heat-inducible transcription repressor HrcA from Novosphingobium aromaticivorans (strain ATCC 700278 / DSM 12444 / CCUG 56034 / CIP 105152 / NBRC 16084 / F199).